The primary structure comprises 373 residues: tRNA pseudouridine synthase Pus10 (373 aa).

The Nucleophile role is filled by Asp-197. Residues Tyr-265 and Tyr-336 each coordinate substrate.

Belongs to the pseudouridine synthase Pus10 family.

The enzyme catalyses uridine(54) in tRNA = pseudouridine(54) in tRNA. It carries out the reaction uridine(55) in tRNA = pseudouridine(55) in tRNA. Functionally, responsible for synthesis of pseudouridine from uracil-54 and uracil-55 in the psi GC loop of transfer RNAs. The protein is tRNA pseudouridine synthase Pus10 of Korarchaeum cryptofilum (strain OPF8).